A 306-amino-acid polypeptide reads, in one-letter code: Ornithine carbamoyltransferase (306 aa).

Residues 51 to 54 (STRT), Gln-78, Arg-102, and 129 to 132 (HPCQ) each bind carbamoyl phosphate. Residues Asn-160, Asp-223, and 227-228 (SM) each bind L-ornithine. Carbamoyl phosphate contacts are provided by residues 263 to 264 (CL) and Arg-291.

Belongs to the aspartate/ornithine carbamoyltransferase superfamily. OTCase family.

The protein localises to the cytoplasm. It carries out the reaction carbamoyl phosphate + L-ornithine = L-citrulline + phosphate + H(+). Its pathway is amino-acid biosynthesis; L-arginine biosynthesis; L-arginine from L-ornithine and carbamoyl phosphate: step 1/3. Its function is as follows. Reversibly catalyzes the transfer of the carbamoyl group from carbamoyl phosphate (CP) to the N(epsilon) atom of ornithine (ORN) to produce L-citrulline. In Trichormus variabilis (strain ATCC 29413 / PCC 7937) (Anabaena variabilis), this protein is Ornithine carbamoyltransferase.